A 634-amino-acid chain; its full sequence is Carbon monoxide dehydrogenase 2 (634 aa).

Positions 44, 53, 56, 61, and 73 each coordinate [4Fe-4S] cluster. [Ni-4Fe-5S] cluster is bound by residues His264, Cys343, Cys453, Cys484, and Cys525.

Belongs to the Ni-containing carbon monoxide dehydrogenase family. As to quaternary structure, homodimer. [4Fe-4S] cluster is required as a cofactor. The cofactor is [Ni-4Fe-5S] cluster.

The catalysed reaction is CO + 2 oxidized [2Fe-2S]-[ferredoxin] + H2O = 2 reduced [2Fe-2S]-[ferredoxin] + CO2 + 2 H(+). In terms of biological role, CODH oxidizes carbon monoxide coupled, via CooF, to the reduction of a hydrogen cation by a hydrogenase (possibly CooH). This chain is Carbon monoxide dehydrogenase 2 (cooS2), found in Methanosarcina mazei (strain ATCC BAA-159 / DSM 3647 / Goe1 / Go1 / JCM 11833 / OCM 88) (Methanosarcina frisia).